Consider the following 119-residue polypeptide: Large ribosomal subunit protein bL20 (119 aa).

The protein belongs to the bacterial ribosomal protein bL20 family.

Functionally, binds directly to 23S ribosomal RNA and is necessary for the in vitro assembly process of the 50S ribosomal subunit. It is not involved in the protein synthesizing functions of that subunit. The chain is Large ribosomal subunit protein bL20 from Shouchella clausii (strain KSM-K16) (Alkalihalobacillus clausii).